A 473-amino-acid chain; its full sequence is L-seryl-tRNA(Sec) selenium transferase (473 aa).

At K302 the chain carries N6-(pyridoxal phosphate)lysine.

It belongs to the SelA family. Pyridoxal 5'-phosphate serves as cofactor.

The protein resides in the cytoplasm. It catalyses the reaction L-seryl-tRNA(Sec) + selenophosphate + H(+) = L-selenocysteinyl-tRNA(Sec) + phosphate. Its pathway is aminoacyl-tRNA biosynthesis; selenocysteinyl-tRNA(Sec) biosynthesis; selenocysteinyl-tRNA(Sec) from L-seryl-tRNA(Sec) (bacterial route): step 1/1. In terms of biological role, converts seryl-tRNA(Sec) to selenocysteinyl-tRNA(Sec) required for selenoprotein biosynthesis. The sequence is that of L-seryl-tRNA(Sec) selenium transferase from Shewanella oneidensis (strain ATCC 700550 / JCM 31522 / CIP 106686 / LMG 19005 / NCIMB 14063 / MR-1).